The following is a 1643-amino-acid chain: Histone transcription regulator 3 homolog (1643 aa).

2 disordered regions span residues 311 to 370 and 1598 to 1629; these read EPFA…NEAE and PTEN…VSKK. The span at 324-343 shows a compositional bias: basic and acidic residues; the sequence is TLEKEGSENGGRTESKRDSE. The segment covering 345–354 has biased composition (polar residues); the sequence is PSDSQRPAQR. Basic and acidic residues predominate over residues 361-370; that stretch reads ERSTETNEAE.

The protein belongs to the HIR3 family.

Its subcellular location is the nucleus. Its function is as follows. Has a role in a nucleosome assembly pathway that is required for the integrity of heterochromatin and proper chromosome segregation. The polypeptide is Histone transcription regulator 3 homolog (HIR3) (Eremothecium gossypii (strain ATCC 10895 / CBS 109.51 / FGSC 9923 / NRRL Y-1056) (Yeast)).